The chain runs to 470 residues: Sulfate adenylyltransferase subunit 1 (470 aa).

The region spanning 22 to 238 (KELLRFITCG…ETIKIDYAYT (217 aa)) is the tr-type G domain. The G1 stretch occupies residues 31–38 (GSVDDGKS). 31–38 (GSVDDGKS) contributes to the GTP binding site. Residues 89 to 93 (GITID) form a G2 region. The G3 stretch occupies residues 110 to 113 (DTPG). GTP-binding positions include 110–114 (DTPGH) and 165–168 (NKMD). The segment at 165–168 (NKMD) is G4. Residues 202–204 (SAL) are G5.

It belongs to the TRAFAC class translation factor GTPase superfamily. Classic translation factor GTPase family. CysN/NodQ subfamily. As to quaternary structure, heterodimer composed of CysD, the smaller subunit, and CysN.

The catalysed reaction is sulfate + ATP + H(+) = adenosine 5'-phosphosulfate + diphosphate. The protein operates within sulfur metabolism; hydrogen sulfide biosynthesis; sulfite from sulfate: step 1/3. With CysD forms the ATP sulfurylase (ATPS) that catalyzes the adenylation of sulfate producing adenosine 5'-phosphosulfate (APS) and diphosphate, the first enzymatic step in sulfur assimilation pathway. APS synthesis involves the formation of a high-energy phosphoric-sulfuric acid anhydride bond driven by GTP hydrolysis by CysN coupled to ATP hydrolysis by CysD. This is Sulfate adenylyltransferase subunit 1 from Francisella tularensis subsp. tularensis (strain SCHU S4 / Schu 4).